The chain runs to 968 residues: Angiomotin-like protein 1 (968 aa).

Polar residues-rich tracts occupy residues 152–164 (VYQS…QGQE) and 177–187 (RSTQPQQNNEE). The tract at residues 152–258 (VYQSARQEPQ…NRANSGQAHK (107 aa)) is disordered. The segment covering 203–224 (GQQQQQQQQQQQQQQQQQQGQG) has biased composition (low complexity). Phosphoserine is present on residues Ser-253, Ser-281, and Ser-307. Positions 271–291 (RSLSERIMQLSLERNGAKQHL) form a coiled coil. A disordered region spans residues 285 to 343 (NGAKQHLPSSGNGKSFKAGGEPSPAQPVCKALDPRGPPPEYPFKTKPMKSPVSKNQDHG). Coiled-coil stretches lie at residues 449 to 645 (VERA…RRLR) and 676 to 705 (ALME…YLEE). The tract at residues 721 to 742 (AERDTTISNHSRNGSYGESSLE) is disordered. Positions 726 to 738 (TISNHSRNGSYGE) are enriched in polar residues. Ser-731 is modified (phosphoserine). Residues 748 to 773 (EEEEVVQANRRCQDMEYTIKNLHAKI) adopt a coiled-coil conformation. Positions 785–834 (QRSRKDAGKTDSASLRPARSVPSIAAATGTHSRQTSLTSSQLTEEKKEEK) are disordered. A phosphoserine mark is found at Ser-804, Ser-816, and Ser-840. Residues 853 to 878 (ASAPLLPTTPASALSLPASTTSASST) are compositionally biased toward low complexity. The segment at 853 to 956 (ASAPLLPTTP…GRVSNLLHKP (104 aa)) is disordered. 2 positions are modified to phosphoserine: Ser-912 and Ser-918. The PDZ-binding signature appears at 965–968 (EVLI).

This sequence belongs to the angiomotin family. Post-translationally, polyubiquitinated by NEDD4, leading to proteasomal degradation. In terms of tissue distribution, expressed in exocrine glands, including pancreas, submandibular gland, lacrimal gland, parotid gland and sublingual gland (at protein level).

It is found in the cell junction. It localises to the tight junction. Inhibits the Wnt/beta-catenin signaling pathway, probably by recruiting CTNNB1 to recycling endosomes and hence preventing its translocation to the nucleus. The chain is Angiomotin-like protein 1 (Amotl1) from Mus musculus (Mouse).